A 368-amino-acid polypeptide reads, in one-letter code: Phosphate acyltransferase (368 aa).

The tract at residues 334–368 (AAPLGESGRDANGAGQASPSAGQPAEPSAALSSKT) is disordered.

Belongs to the PlsX family. As to quaternary structure, homodimer. Probably interacts with PlsY.

It is found in the cytoplasm. It catalyses the reaction a fatty acyl-[ACP] + phosphate = an acyl phosphate + holo-[ACP]. Its pathway is lipid metabolism; phospholipid metabolism. Functionally, catalyzes the reversible formation of acyl-phosphate (acyl-PO(4)) from acyl-[acyl-carrier-protein] (acyl-ACP). This enzyme utilizes acyl-ACP as fatty acyl donor, but not acyl-CoA. The chain is Phosphate acyltransferase from Burkholderia pseudomallei (strain 1106a).